Consider the following 423-residue polypeptide: Serine--tRNA ligase (423 aa).

Threonine 231–glutamate 233 provides a ligand contact to L-serine. Arginine 262 to glutamate 264 is a binding site for ATP. Residue glutamate 285 participates in L-serine binding. Glutamate 349–serine 352 provides a ligand contact to ATP. Serine 384 lines the L-serine pocket.

This sequence belongs to the class-II aminoacyl-tRNA synthetase family. Type-1 seryl-tRNA synthetase subfamily. In terms of assembly, homodimer. The tRNA molecule binds across the dimer.

The protein localises to the cytoplasm. The enzyme catalyses tRNA(Ser) + L-serine + ATP = L-seryl-tRNA(Ser) + AMP + diphosphate + H(+). It carries out the reaction tRNA(Sec) + L-serine + ATP = L-seryl-tRNA(Sec) + AMP + diphosphate + H(+). It participates in aminoacyl-tRNA biosynthesis; selenocysteinyl-tRNA(Sec) biosynthesis; L-seryl-tRNA(Sec) from L-serine and tRNA(Sec): step 1/1. Functionally, catalyzes the attachment of serine to tRNA(Ser). Is also able to aminoacylate tRNA(Sec) with serine, to form the misacylated tRNA L-seryl-tRNA(Sec), which will be further converted into selenocysteinyl-tRNA(Sec). The chain is Serine--tRNA ligase from Acinetobacter baumannii (strain AB307-0294).